Reading from the N-terminus, the 589-residue chain is ATP-dependent lipid A-core flippase (589 aa).

5 helical membrane-spanning segments follow: residues 29–49, 70–90, 157–177, 261–281, and 283–303; these read LLLV…TGFL, WLPV…YITD, VIGA…TILV, MIGA…ALAG, and LTAG…PGLK. The ABC transmembrane type-1 domain occupies 32-314; the sequence is VAALIAALIE…LTNVQNMVQR (283 aa). The 237-residue stretch at 346–582 folds into the ABC transporter domain; it reads IEFRDVTARY…GGLYSHLHGM (237 aa). 380–387 contacts ATP; sequence GRSGSGKS.

The protein belongs to the ABC transporter superfamily. Lipid exporter (TC 3.A.1.106) family. As to quaternary structure, homodimer.

It is found in the cell inner membrane. It catalyses the reaction ATP + H2O + lipid A-core oligosaccharideSide 1 = ADP + phosphate + lipid A-core oligosaccharideSide 2.. In terms of biological role, involved in lipopolysaccharide (LPS) biosynthesis. Translocates lipid A-core from the inner to the outer leaflet of the inner membrane. Transmembrane domains (TMD) form a pore in the inner membrane and the ATP-binding domain (NBD) is responsible for energy generation. The chain is ATP-dependent lipid A-core flippase from Xanthomonas euvesicatoria pv. vesicatoria (strain 85-10) (Xanthomonas campestris pv. vesicatoria).